The following is a 196-amino-acid chain: Mitochondrial intermembrane space cysteine motif-containing protein MIX23 (196 aa).

The Cx14C motif motif lies at 99 to 114 (CEKEAAEMKNETDQQC). A Cx13C motif motif is present at residues 178–192 (CEQNNDYLKEFTQFC).

It belongs to the MIX23 family.

Its subcellular location is the mitochondrion intermembrane space. Regulator of the mitochondrial protein import machinery that is localized in the mitochondrial intermembrane space (IMS) and facilitates the transport of proteins from the cytosol into the mitochondrial matrix. Not essential for mitochondrial protein import but induced and required when mitochondrial import is compromised. Stimulates or stabilizes the translocation into the mitochondria of proteins such as OXA1, ATP1 and COX12. The sequence is that of Mitochondrial intermembrane space cysteine motif-containing protein MIX23 from Saccharomyces cerevisiae (strain ATCC 204508 / S288c) (Baker's yeast).